A 209-amino-acid polypeptide reads, in one-letter code: MAKNISTKQLSVLEYIYKTVNAQGYPPTVREIGSAIGLSSTSTVHGHIDRLQKNGFLEKDPTKPRALEVTKLGLDALGVQDKNPTIPLLGVVTAGEPILAVEEATDFFPVPPEYENDSSNLFMLTIRGESMINAGILSGDQVIVRKQSTADNGTIVIAMTDENEATCKRFYRESDHIRLQPENDTMAPIILDNVTILGKVVGLFRDNIY.

The segment at residues 29-49 (VREIGSAIGLSSTSTVHGHID) is a DNA-binding region (H-T-H motif). Catalysis depends on for autocatalytic cleavage activity residues Ser130 and Lys168.

This sequence belongs to the peptidase S24 family. Homodimer.

The catalysed reaction is Hydrolysis of Ala-|-Gly bond in repressor LexA.. Its function is as follows. Represses a number of genes involved in the response to DNA damage (SOS response), including recA and lexA. In the presence of single-stranded DNA, RecA interacts with LexA causing an autocatalytic cleavage which disrupts the DNA-binding part of LexA, leading to derepression of the SOS regulon and eventually DNA repair. This is LexA repressor from Pediococcus pentosaceus (strain ATCC 25745 / CCUG 21536 / LMG 10740 / 183-1w).